The sequence spans 254 residues: MQAQEANALLLSRMEALEWFKKFTVWLRVYAIFIFQLAFSFGLGSVFWLGFPQNRNFCVENYSFFLTVLVPIVCMFITYTLGNEHPSNATVLFIYLLANSLTAAIFQMCSESRVLVGSYVMTLALFISFTGLAFLGGRDRRRWKCISCVYVVMLLSFLTLALLSDADWLQKIVVTLCAFSISFFLGILAYDSLMVIFFCPPNQCIRHAVCLYLDSMAIFLTLLLMLSGPRWISLSDGAPLDNGTLTAASTTGKS.

The next 7 membrane-spanning stretches (helical) occupy residues 31-51, 62-82, 89-109, 114-134, 143-163, 178-198, and 208-228; these read AIFI…WLGF, YSFF…YTLG, ATVL…FQMC, VLVG…GLAF, WKCI…LALL, AFSI…VIFF, and AVCL…MLSG.

The protein resides in the host membrane. The polypeptide is Membrane protein US20 (US20) (Homo sapiens (Human)).